A 189-amino-acid chain; its full sequence is Elongation factor P 2 (189 aa).

It belongs to the elongation factor P family.

It localises to the cytoplasm. Its pathway is protein biosynthesis; polypeptide chain elongation. Functionally, involved in peptide bond synthesis. Stimulates efficient translation and peptide-bond synthesis on native or reconstituted 70S ribosomes in vitro. Probably functions indirectly by altering the affinity of the ribosome for aminoacyl-tRNA, thus increasing their reactivity as acceptors for peptidyl transferase. The protein is Elongation factor P 2 of Lactobacillus acidophilus (strain ATCC 700396 / NCK56 / N2 / NCFM).